The chain runs to 288 residues: MNIKYFLIFLILLAVTSFTLFSGCTGFAGNTPETSGKNSNVESIENLVPDISNNASDVLYQVSTIDALLLGVYDGVLPVSDLKTHGDFGIGTFDGLEGEMLALDGNYYQIKTDGIAYPVSGEITTPFATVTYFEADETFRLEKSANLSELEDFLDLNLPSENLFYAVKVDGNFSYVKARSVPRQEKPYLQLADAVSSQSVFEFENVSGTLVGFRTPEYVKGVNVPGYHLHFITENRSAGGHVLDLEMEKGDAALDITSIFLMELPASGDFYNAELGQNLQEDLEKVEK.

Residues 1–23 (MNIKYFLIFLILLAVTSFTLFSG) form the signal peptide.

The protein belongs to the alpha-acetolactate decarboxylase family.

The catalysed reaction is (2S)-2-acetolactate + H(+) = (R)-acetoin + CO2. It participates in polyol metabolism; (R,R)-butane-2,3-diol biosynthesis; (R,R)-butane-2,3-diol from pyruvate: step 2/3. In terms of biological role, converts acetolactate into acetoin. The chain is Alpha-acetolactate decarboxylase from Methanosarcina mazei (strain ATCC BAA-159 / DSM 3647 / Goe1 / Go1 / JCM 11833 / OCM 88) (Methanosarcina frisia).